The primary structure comprises 304 residues: GTP cyclohydrolase FolE2 (304 aa).

Belongs to the GTP cyclohydrolase IV family.

It carries out the reaction GTP + H2O = 7,8-dihydroneopterin 3'-triphosphate + formate + H(+). Its pathway is cofactor biosynthesis; 7,8-dihydroneopterin triphosphate biosynthesis; 7,8-dihydroneopterin triphosphate from GTP: step 1/1. Converts GTP to 7,8-dihydroneopterin triphosphate. This chain is GTP cyclohydrolase FolE2, found in Bdellovibrio bacteriovorus (strain ATCC 15356 / DSM 50701 / NCIMB 9529 / HD100).